The sequence spans 270 residues: Homeobox protein vent1B (270 aa).

Basic and acidic residues-rich tracts occupy residues 17–26 and 44–59; these read EEAADGKDSM and YAKE…DVQE. Disordered stretches follow at residues 17 to 66 and 88 to 134; these read EEAA…SFQC and TWGS…LRTA. The segment covering 89-99 has biased composition (polar residues); that stretch reads WGSSDEFSSAG. A compositionally biased stretch (basic and acidic residues) spans 116-131; sequence QDTDHNGKSTKSDRRL. The segment at residues 128 to 187 is a DNA-binding region (homeobox); sequence DRRLRTAFSPQQISKLEQAFNKQRYLGASERKKLATSLMLSEIQVKTWFQNRRMKLKRQI.

As to expression, expressed in the ventral marginal zone of gastrulae. At the end of gastrulation, predominantly localized to the ventral region of the closing slit blastopore. At early tail bud stage, expression is maintained only in the forming proctodeum.

It localises to the nucleus. Probable transcription regulator. Acts in a ventral signaling pathway downstream of bmp4 and vent2B. The sequence is that of Homeobox protein vent1B (vent1B) from Xenopus laevis (African clawed frog).